The chain runs to 469 residues: 3-isopropylmalate dehydratase large subunit (469 aa).

Residues cysteine 347, cysteine 408, and cysteine 411 each coordinate [4Fe-4S] cluster.

This sequence belongs to the aconitase/IPM isomerase family. LeuC type 1 subfamily. As to quaternary structure, heterodimer of LeuC and LeuD. It depends on [4Fe-4S] cluster as a cofactor.

The enzyme catalyses (2R,3S)-3-isopropylmalate = (2S)-2-isopropylmalate. It functions in the pathway amino-acid biosynthesis; L-leucine biosynthesis; L-leucine from 3-methyl-2-oxobutanoate: step 2/4. Functionally, catalyzes the isomerization between 2-isopropylmalate and 3-isopropylmalate, via the formation of 2-isopropylmaleate. The sequence is that of 3-isopropylmalate dehydratase large subunit from Haemophilus influenzae (strain ATCC 51907 / DSM 11121 / KW20 / Rd).